A 115-amino-acid polypeptide reads, in one-letter code: Class I hydrophobin 21 (115 aa).

The first 20 residues, 1 to 20 (MFAAPATMLVLAALAALSSA), serve as a signal peptide directing secretion. Intrachain disulfides connect C30/C93, C37/C87, C38/C77, and C94/C107.

Belongs to the fungal hydrophobin family. In terms of assembly, self-assembles to form functional amyloid fibrils called rodlets. Self-assembly into fibrillar rodlets occurs spontaneously at hydrophobic:hydrophilic interfaces and the rodlets further associate laterally to form amphipathic monolayers.

The protein resides in the secreted. Its subcellular location is the cell wall. Its function is as follows. Aerial growth, conidiation, and dispersal of filamentous fungi in the environment rely upon a capability of their secreting small amphipathic proteins called hydrophobins (HPBs) with low sequence identity. Class I can self-assemble into an outermost layer of rodlet bundles on aerial cell surfaces, conferring cellular hydrophobicity that supports fungal growth, development and dispersal; whereas Class II form highly ordered films at water-air interfaces through intermolecular interactions but contribute nothing to the rodlet structure. The chain is Class I hydrophobin 21 from Pleurotus ostreatus (strain PC15) (Oyster mushroom).